Here is a 100-residue protein sequence, read N- to C-terminus: Large ribosomal subunit protein uL23 (100 aa).

It belongs to the universal ribosomal protein uL23 family. In terms of assembly, part of the 50S ribosomal subunit. Contacts protein L29, and trigger factor when it is bound to the ribosome.

Functionally, one of the early assembly proteins it binds 23S rRNA. One of the proteins that surrounds the polypeptide exit tunnel on the outside of the ribosome. Forms the main docking site for trigger factor binding to the ribosome. This Lacticaseibacillus casei (strain BL23) (Lactobacillus casei) protein is Large ribosomal subunit protein uL23.